The sequence spans 556 residues: MEPTVAPGEVLMSQAIQPAHADSRGELSAGQLLKWMDTTACLAAEKHAGISCVTASMDDILFEDTARIGQIVTIRAKVTRAFSTSMEISIKVRVQDKFTGIQKLLCVAFSTFVVKPLGKEKVHLKPVLLQTEQEQVEHRLASERRKVRLQHENTFSNIMKESNWLRDPVCNEEEGTATTMATSVQSIELVLPPHANHHGNTFGGQIMAWMETVATISASRLCHGHPFLKSVDMFKFRGPSTVGDRLVFNAIVNNTFQNSVEVGVRVEAFDCREWAEGQGRHINSAFLIYNAVDDQEELITFPRIQPISKDDFRRYQGAIARRRIRLGRKYVISHKKEVPLGTQWDISKKGSISNTNVEALKNLASKSGWEITTTLEKIKIYTLEEQDAISVKVEKQVGSPARVAYHLLSDFTKRPLWDPHYISCEVIDQVSEDDQIYYITCSVVNGDKPKDFVVLVSQRKPLKDDNTYIVALMSVVLPSVPPSPQYIRSQVICAGFLIQPVDSSSCTVAYLNQMSDSILPYFAGNIGGWSKSIEEAAASCIKFIENATHDGLKSVL.

The HotDog ACOT-type 1 domain occupies 6 to 118 (APGEVLMSQA…FSTFVVKPLG (113 aa)). K34 bears the N6-succinyllysine mark. CoA contacts are provided by residues 54-56 (TAS) and 83-85 (STS). At K97 the chain carries N6-succinyllysine. Residue R145 participates in CoA binding. N6-succinyllysine is present on residues K160 and K229. The region spanning 180–295 (MATSVQSIEL…FLIYNAVDDQ (116 aa)) is the HotDog ACOT-type 2 domain. 235–237 (KFR) lines the CoA pocket. Residues 341–550 (GTQWDISKKG…IKFIENATHD (210 aa)) form the START domain.

In terms of assembly, homodimer or homotetramer.

It is found in the cytoplasm. The protein resides in the cytosol. It carries out the reaction acetyl-CoA + H2O = acetate + CoA + H(+). The catalysed reaction is butanoyl-CoA + H2O = butanoate + CoA + H(+). It catalyses the reaction hexanoyl-CoA + H2O = hexanoate + CoA + H(+). It functions in the pathway lipid metabolism; fatty acid metabolism. Allosterically regulated by ATP (activator) and ADP (inhibitor). Cold labile, it dissociates into inactive monomers at low temperature. In terms of biological role, catalyzes the hydrolysis of acyl-CoAs into free fatty acids and coenzyme A (CoASH), regulating their respective intracellular levels. Preferentially hydrolyzes acetyl-CoA. The sequence is that of Acetyl-coenzyme A thioesterase (Acot12) from Rattus norvegicus (Rat).